The sequence spans 465 residues: Glutamate--tRNA ligase 2 (465 aa).

A 'HIGH' region motif is present at residues 8 to 18 (PSPTGLMHLGN). The 'KMSKS' region signature appears at 249–253 (PLSKR). K252 provides a ligand contact to ATP.

It belongs to the class-I aminoacyl-tRNA synthetase family. Glutamate--tRNA ligase type 1 subfamily. As to quaternary structure, monomer.

The protein resides in the cytoplasm. It carries out the reaction tRNA(Glu) + L-glutamate + ATP = L-glutamyl-tRNA(Glu) + AMP + diphosphate. In terms of biological role, catalyzes the attachment of glutamate to tRNA(Glu) in a two-step reaction: glutamate is first activated by ATP to form Glu-AMP and then transferred to the acceptor end of tRNA(Glu). The protein is Glutamate--tRNA ligase 2 of Coxiella burnetii (strain CbuK_Q154) (Coxiella burnetii (strain Q154)).